The sequence spans 121 residues: Mitochondrial intermembrane space cysteine motif-containing protein MIX14 (121 aa).

2 consecutive CHCH domains span residues 14-56 (VANC…VPSV) and 60-105 (MSEC…VKNK). Short sequence motifs (cx9C motif) lie at residues 17–27 (CPQEFLQYHKC), 38–48 (CKDGRMILSTC), 63–73 (CSEPMKKYDQC), and 87–97 (CLGFLQDLRKC). 4 disulfide bridges follow: C17–C48, C27–C38, C63–C97, and C73–C87.

The protein resides in the mitochondrion intermembrane space. The protein is Mitochondrial intermembrane space cysteine motif-containing protein MIX14 (MIX14) of Saccharomyces cerevisiae (strain ATCC 204508 / S288c) (Baker's yeast).